The following is a 58-amino-acid chain: Large ribosomal subunit protein eL37 (58 aa).

The span at 1–17 (MTGAGTPSQGKKNTTTH) shows a compositional bias: polar residues. The tract at residues 1–26 (MTGAGTPSQGKKNTTTHTKCRRCGEK) is disordered. Positions 20, 23, 35, and 38 each coordinate Zn(2+). The segment at 20-38 (CRRCGEKSYHTKKKVCSSC) adopts a C4-type zinc-finger fold.

This sequence belongs to the eukaryotic ribosomal protein eL37 family. The cofactor is Zn(2+).

In terms of biological role, binds to the 23S rRNA. The polypeptide is Large ribosomal subunit protein eL37 (Halobacterium salinarum (strain ATCC 29341 / DSM 671 / R1)).